The sequence spans 258 residues: Acyl-[acyl-carrier-protein]--UDP-N-acetylglucosamine O-acyltransferase (258 aa).

This sequence belongs to the transferase hexapeptide repeat family. LpxA subfamily. Homotrimer.

Its subcellular location is the cytoplasm. The catalysed reaction is a (3R)-hydroxyacyl-[ACP] + UDP-N-acetyl-alpha-D-glucosamine = a UDP-3-O-[(3R)-3-hydroxyacyl]-N-acetyl-alpha-D-glucosamine + holo-[ACP]. It functions in the pathway glycolipid biosynthesis; lipid IV(A) biosynthesis; lipid IV(A) from (3R)-3-hydroxytetradecanoyl-[acyl-carrier-protein] and UDP-N-acetyl-alpha-D-glucosamine: step 1/6. Involved in the biosynthesis of lipid A, a phosphorylated glycolipid that anchors the lipopolysaccharide to the outer membrane of the cell. The protein is Acyl-[acyl-carrier-protein]--UDP-N-acetylglucosamine O-acyltransferase of Neisseria meningitidis serogroup B (strain ATCC BAA-335 / MC58).